The sequence spans 956 residues: Chromatin assembly factor 1 subunit A (956 aa).

Residues 1 to 49 are binds to PCNA; the sequence is MLEELECGAPGARGAATAMDCKDRPAFPVKKLIQARLPFKRLNLVPKGK. The segment at 1–314 is binds to CBX1 chromo shadow domain; sequence MLEELECGAP…QHSSTSPFPT (314 aa). Disordered stretches follow at residues 45–65 and 122–155; these read VPKGKADDMSDDQGTSVQSKS and DSNEQPDSLVDHNKLNSEASPSREAINGQREDTG. A compositionally biased stretch (polar residues) spans 56 to 65; the sequence is DQGTSVQSKS. Phosphoserine is present on residues Ser65, Ser123, Ser138, Ser141, and Ser143. Lys182 is covalently cross-linked (Glycyl lysine isopeptide (Lys-Gly) (interchain with G-Cter in SUMO1); alternate). Residue Lys182 forms a Glycyl lysine isopeptide (Lys-Gly) (interchain with G-Cter in SUMO2); alternate linkage. The disordered stretch occupies residues 188–222; sequence VGCGGAGRRGDSQECSPRSCPELTSGPRMCPRKEQ. Phosphoserine is present on residues Ser206 and Ser224. Residues 233–246 carry the PxVxL motif motif; the sequence is FKGKVPMVVLQDIL. Disordered regions lie at residues 250–432 and 599–639; these read PPQI…KRLR and DSDE…VPHG. 2 stretches are compositionally biased toward low complexity: residues 282-296 and 307-317; these read LSHSSLSSPSSTSSP and SSTSPFPTSTP. Ser310 carries the post-translational modification Phosphoserine. Residues 329–432 show a composition bias toward basic and acidic residues; it reads STEKNKLRLQ…RKKEEEKRLR (104 aa). Composition is skewed to acidic residues over residues 599–610 and 618–633; these read DSDEEWEEEEPG and GDDDDDMGEDEDEDDG. Residues 642–678 form a necessary for homodimerization and competence for chromatin assembly region; sequence SEDEGVTEECADPENHKVRQKLKAKEWDEFLAKGKRF. Residues 660 to 956 are binds to p60; the sequence is RQKLKAKEWD…TLTASPLGAS (297 aa). A Phosphothreonine modification is found at Thr722. The disordered stretch occupies residues 765-790; that stretch reads LLSNHTGSPRSPSTTYLHTPTPSEDA. Residues 767-786 are compositionally biased toward polar residues; it reads SNHTGSPRSPSTTYLHTPTP. Phosphoserine occurs at positions 772, 775, and 803. 2 disordered regions span residues 844–873 and 933–956; these read SVPSAPKEDSGSVPSTGPSQGTPISLKRKS and SGAGGGVGVDTGKATLTASPLGAS. The segment covering 855–866 has biased composition (polar residues); the sequence is SVPSTGPSQGTP. Thr865 is subject to Phosphothreonine. 3 positions are modified to phosphoserine: Ser868, Ser873, and Ser951.

The protein belongs to the CHAF1A family. Homodimer. Part of the CAF-1 complex that contains RBBP4, CHAF1B and CHAF1A. CHAF1A binds directly to CHAF1B. Only minor amounts of RBBP4 are complexed with CHAF1A and CHAF1B in G1 phase. Interacts with PCNA; the interaction is direct. Interacts (via the PxVxL motif) with CBX5; the interaction is direct. Interacts with MBD1. Interacts with histones H3.1, H3.2 and H3.1t.

The protein resides in the nucleus. In terms of biological role, acts as a component of the histone chaperone complex chromatin assembly factor 1 (CAF-1), which assembles histone octamers onto DNA during replication and repair. CAF-1 performs the first step of the nucleosome assembly process, bringing newly synthesized histones H3 and H4 to replicating DNA; histones H2A/H2B can bind to this chromatin precursor subsequent to DNA replication to complete the histone octamer. It may play a role in heterochromatin maintenance in proliferating cells by bringing newly synthesized cbx proteins to heterochromatic DNA replication foci. The sequence is that of Chromatin assembly factor 1 subunit A from Homo sapiens (Human).